The primary structure comprises 134 residues: ATP synthase epsilon chain (134 aa).

This sequence belongs to the ATPase epsilon chain family. In terms of assembly, F-type ATPases have 2 components, CF(1) - the catalytic core - and CF(0) - the membrane proton channel. CF(1) has five subunits: alpha(3), beta(3), gamma(1), delta(1), epsilon(1). CF(0) has three main subunits: a, b and c.

It localises to the cellular thylakoid membrane. In terms of biological role, produces ATP from ADP in the presence of a proton gradient across the membrane. The sequence is that of ATP synthase epsilon chain from Prochlorococcus marinus (strain AS9601).